Reading from the N-terminus, the 253-residue chain is Isoprenyl transferase (253 aa).

D32 is an active-site residue. A Mg(2+)-binding site is contributed by D32. Substrate contacts are provided by residues 33–36 (GNGR), W37, R45, H49, and 77–79 (STE). N80 serves as the catalytic Proton acceptor. Substrate is bound by residues W81, R83, R200, and 206 to 208 (RLS). Position 219 (E219) interacts with Mg(2+).

It belongs to the UPP synthase family. In terms of assembly, homodimer. It depends on Mg(2+) as a cofactor.

In terms of biological role, catalyzes the condensation of isopentenyl diphosphate (IPP) with allylic pyrophosphates generating different type of terpenoids. This chain is Isoprenyl transferase, found in Clostridium perfringens (strain 13 / Type A).